We begin with the raw amino-acid sequence, 276 residues long: Ribosomal RNA small subunit methyltransferase A (276 aa).

Positions 27, 29, 54, 75, 101, and 122 each coordinate S-adenosyl-L-methionine.

This sequence belongs to the class I-like SAM-binding methyltransferase superfamily. rRNA adenine N(6)-methyltransferase family. RsmA subfamily.

The protein localises to the cytoplasm. It carries out the reaction adenosine(1518)/adenosine(1519) in 16S rRNA + 4 S-adenosyl-L-methionine = N(6)-dimethyladenosine(1518)/N(6)-dimethyladenosine(1519) in 16S rRNA + 4 S-adenosyl-L-homocysteine + 4 H(+). Functionally, specifically dimethylates two adjacent adenosines (A1518 and A1519) in the loop of a conserved hairpin near the 3'-end of 16S rRNA in the 30S particle. May play a critical role in biogenesis of 30S subunits. This is Ribosomal RNA small subunit methyltransferase A from Brucella abortus biovar 1 (strain 9-941).